We begin with the raw amino-acid sequence, 222 residues long: MVKSSLQRILNSHCFAREKEGDKRSATLHASRTMPLLSQHSRGGCSSESSRAALHCCSNLGPGPRWCSYVPHPPLKIPGGRGNSQRDHSLSASVLYSDERLNVTEEPTANDKTRVLSIQSRLTEAKQVTWRAVWNGGGLYIELPAGPSPEGSKDSFAALLEFAEEQLQADHVFICFPKNREDRAALLRTFSFLGFEIVRPGHPLVPKRPDACFMVYTLERED.

The protein belongs to the ODC antizyme family. As to quaternary structure, interacts with ODC1 and thereby sterically blocks ODC homodimerization. Forms a ternary complex with PSMB4 and OAZ1 before PSMB4 is incorporated into the 20S proteasome. Interacts with AZIN2; this interaction disrupts the interaction between the antizyme and ODC1. Interacts with FAM171A1.

Functionally, ornithine decarboxylase (ODC) antizyme protein that negatively regulates ODC activity and intracellular polyamine biosynthesis and uptake in response to increased intracellular polyamine levels. Binds to ODC monomers, inhibiting the assembly of the functional ODC homodimer, and targets the monomers for ubiquitin-independent proteolytic destruction by the 26S proteasome. Triggers ODC degradation by inducing the exposure of a cryptic proteasome-interacting surface of ODC. Stabilizes AZIN2 by interfering with its ubiquitination. Also inhibits cellular uptake of polyamines by inactivating the polyamine uptake transporter. SMAD1/OAZ1/PSMB4 complex mediates the degradation of the CREBBP/EP300 repressor SNIP1. Involved in the translocation of AZIN2 from ER-Golgi intermediate compartment (ERGIC) to the cytosol. The sequence is that of Ornithine decarboxylase antizyme 1 (OAZ1) from Mesocricetus auratus (Golden hamster).